The primary structure comprises 117 residues: Nascent polypeptide-associated complex protein (117 aa).

An NAC-A/B domain is found at 9-77 (PKQLKQMQRA…ARERSLEAEM (69 aa)).

The protein belongs to the NAC-alpha family. As to quaternary structure, homodimer. Interacts with the ribosome. Binds ribosomal RNA.

Contacts the emerging nascent chain on the ribosome. This Methanothermobacter thermautotrophicus (strain ATCC 29096 / DSM 1053 / JCM 10044 / NBRC 100330 / Delta H) (Methanobacterium thermoautotrophicum) protein is Nascent polypeptide-associated complex protein.